The primary structure comprises 189 residues: Large ribosomal subunit protein uL6 (189 aa).

This sequence belongs to the universal ribosomal protein uL6 family. Part of the 50S ribosomal subunit.

In terms of biological role, this protein binds to the 23S rRNA, and is important in its secondary structure. It is located near the subunit interface in the base of the L7/L12 stalk, and near the tRNA binding site of the peptidyltransferase center. The polypeptide is Large ribosomal subunit protein uL6 (Microcystis aeruginosa (strain NIES-843 / IAM M-2473)).